Reading from the N-terminus, the 446-residue chain is MVAQAPHDDHQDDEKLAAARQKEIEDWLPITSSRNAKWWYSAFHNVTAMVGAGVLGLPYAMSQLGWGPGIAVLVLSWVITLYTLWQMVEMHEMVPGKRFDRYHELGQHAFGEKLGLYIVVPQQLIVEIGVCIVYMVTGGKSLKKFHELVCDDCKPIKLTYFIMIFASVHFVLSHLPNFNSISGVSLAAAVMSLSYSTIAWASSASKGVQEDVQYGYKAKTTAGTVFNFFSGLGDVAFAYAGHNVVLEIQATIPSTPEKPSKGPMWRGVIVAYIVVALCYFPVALVGYYIFGNGVEDNILMSLKKPAWLIATANIFVVIHVIGSYQIYAMPVFDMMETLLVKKLNFRPTTTLRFFVRNFYVAATMFVGMTFPFFGGLLAFFGGFAFAPTTYFLPCVIWLAIYKPKKYSLSWWANWVCIVFGLFLMVLSPIGGLRTIVIQAKGYKFYS.

The Cytoplasmic segment spans residues Met1–Lys37. Residues Trp38 to Pro58 traverse the membrane as a helical segment. Topologically, residues Tyr59–Gln63 are extracellular. The helical transmembrane segment at Leu64–Leu84 threads the bilayer. Over Trp85–Gly115 the chain is Cytoplasmic. The chain crosses the membrane as a helical span at residues Leu116–Val136. Residues Thr137 to Lys157 lie on the Extracellular side of the membrane. The chain crosses the membrane as a helical span at residues Leu158–Phe178. Over Asn179 to Ser180 the chain is Cytoplasmic. Residues Ile181–Ala201 traverse the membrane as a helical segment. The Extracellular portion of the chain corresponds to Ser202 to Asn227. Residues Phe228 to Ile248 traverse the membrane as a helical segment. The Cytoplasmic portion of the chain corresponds to Gln249–Val268. A helical membrane pass occupies residues Ile269–Ile289. Over Phe290–Pro305 the chain is Extracellular. Residues Ala306–Ile326 traverse the membrane as a helical segment. Residues Tyr327–Arg352 lie on the Cytoplasmic side of the membrane. A helical transmembrane segment spans residues Phe353–Gly375. Topologically, residues Leu376–Ala378 are extracellular. Residues Phe379–Tyr401 form a helical membrane-spanning segment. The Cytoplasmic segment spans residues Lys402–Ser409. A helical transmembrane segment spans residues Trp410–Gly430. The Extracellular portion of the chain corresponds to Gly431–Ser446.

This sequence belongs to the amino acid/polyamine transporter 2 family. Amino acid/auxin permease (AAAP) (TC 2.A.18.2) subfamily. Expressed in roots, stems, flowers, leaves, siliques and pollen. Found in the tips of roots and in the rhizodermis of emerging roots and in lateral roots. Higher expression in older leaves as compared to joung leaves. Detected first at the hydathodes, then in the epidermis and finally in matures leaves in all mesophyll cells. Not detected in vascular bundles or in seeds.

The protein localises to the cell membrane. With respect to regulation, inhibited by carbonlycyanide m-chlorophenylhydrazone (CCCP) and DEPC. Functionally, amino acid-proton symporter. Transporter with a broad specificity for histidine, lysine, glutamic acid, alanine, serine, proline and glycine. Involved in both apoplastic transport of amino acids in leaves and their uptake by roots. The sequence is that of Lysine histidine transporter 1 (LHT1) from Arabidopsis thaliana (Mouse-ear cress).